The following is a 258-amino-acid chain: KFLQIAVEEHYQSFDKNNIRDVTDSLWRSKKTKPRGAADPNEKIINLVNDIFGAGFDTVTTALSWSLMYLVTQPHSQKKIQESELDTAIGRERRSWLSERSMLPYKEAFILETVPTWQFVPFTIPHSTTRDTTLNGFHIPKECCVFVNQWQVNHEAELWEDPFVFRTERFLTDDSTAIDKTLSEKVMGKQVGLAWKSALGTRQWEVSFYLSTLTPNWSSAPGGESKKDRVRPIYGLSMKHKRCEHFQVKKRFSMKSSN.

This sequence belongs to the cytochrome P450 family. The cofactor is heme.

It is found in the endoplasmic reticulum membrane. The protein resides in the microsome membrane. The enzyme catalyses an organic molecule + reduced [NADPH--hemoprotein reductase] + O2 = an alcohol + oxidized [NADPH--hemoprotein reductase] + H2O + H(+). In terms of biological role, cytochromes P450 are a group of heme-thiolate monooxygenases. In liver microsomes, this enzyme is involved in an NADPH-dependent electron transport pathway. It oxidizes a variety of structurally unrelated compounds, including steroids, fatty acids, and xenobiotics. The protein is Cytochrome P450 1A2 (CYP1A2) of Gallus gallus (Chicken).